The following is a 211-amino-acid chain: Nucleoside triphosphate pyrophosphatase (211 aa).

Aspartate 76 serves as the catalytic Proton acceptor.

It belongs to the Maf family. Requires a divalent metal cation as cofactor.

The protein resides in the cytoplasm. The enzyme catalyses a ribonucleoside 5'-triphosphate + H2O = a ribonucleoside 5'-phosphate + diphosphate + H(+). It carries out the reaction a 2'-deoxyribonucleoside 5'-triphosphate + H2O = a 2'-deoxyribonucleoside 5'-phosphate + diphosphate + H(+). Its function is as follows. Nucleoside triphosphate pyrophosphatase. May have a dual role in cell division arrest and in preventing the incorporation of modified nucleotides into cellular nucleic acids. This Saccharopolyspora erythraea (strain ATCC 11635 / DSM 40517 / JCM 4748 / NBRC 13426 / NCIMB 8594 / NRRL 2338) protein is Nucleoside triphosphate pyrophosphatase.